Here is a 270-residue protein sequence, read N- to C-terminus: S-adenosylmethionine decarboxylase proenzyme (270 aa).

Catalysis depends on Ser-120, which acts as the Schiff-base intermediate with substrate; via pyruvic acid. Ser-120 is subject to Pyruvic acid (Ser); by autocatalysis. The active-site Proton acceptor; for processing activity is His-125. The Proton donor; for catalytic activity role is filled by Cys-148.

This sequence belongs to the prokaryotic AdoMetDC family. Type 2 subfamily. In terms of assembly, heterooctamer of four alpha and four beta chains arranged as a tetramer of alpha/beta heterodimers. The cofactor is pyruvate. In terms of processing, is synthesized initially as an inactive proenzyme. Formation of the active enzyme involves a self-maturation process in which the active site pyruvoyl group is generated from an internal serine residue via an autocatalytic post-translational modification. Two non-identical subunits are generated from the proenzyme in this reaction, and the pyruvate is formed at the N-terminus of the alpha chain, which is derived from the carboxyl end of the proenzyme. The post-translation cleavage follows an unusual pathway, termed non-hydrolytic serinolysis, in which the side chain hydroxyl group of the serine supplies its oxygen atom to form the C-terminus of the beta chain, while the remainder of the serine residue undergoes an oxidative deamination to produce ammonia and the pyruvoyl group blocking the N-terminus of the alpha chain.

The catalysed reaction is S-adenosyl-L-methionine + H(+) = S-adenosyl 3-(methylsulfanyl)propylamine + CO2. It participates in amine and polyamine biosynthesis; S-adenosylmethioninamine biosynthesis; S-adenosylmethioninamine from S-adenosyl-L-methionine: step 1/1. In terms of biological role, catalyzes the decarboxylation of S-adenosylmethionine to S-adenosylmethioninamine (dcAdoMet), the propylamine donor required for the synthesis of the polyamines spermine and spermidine from the diamine putrescine. This chain is S-adenosylmethionine decarboxylase proenzyme, found in Alkaliphilus oremlandii (strain OhILAs) (Clostridium oremlandii (strain OhILAs)).